A 307-amino-acid chain; its full sequence is Glutaminase (307 aa).

Positions 66, 117, 161, 168, 192, 243, and 261 each coordinate substrate.

Belongs to the glutaminase family. In terms of assembly, homotetramer.

The enzyme catalyses L-glutamine + H2O = L-glutamate + NH4(+). The chain is Glutaminase from Serratia proteamaculans (strain 568).